A 512-amino-acid polypeptide reads, in one-letter code: ATP synthase subunit alpha (512 aa).

170–177 is an ATP binding site; that stretch reads GDRQTGKT.

Belongs to the ATPase alpha/beta chains family. In terms of assembly, F-type ATPases have 2 components, CF(1) - the catalytic core - and CF(0) - the membrane proton channel. CF(1) has five subunits: alpha(3), beta(3), gamma(1), delta(1), epsilon(1). CF(0) has three main subunits: a(1), b(2) and c(9-12). The alpha and beta chains form an alternating ring which encloses part of the gamma chain. CF(1) is attached to CF(0) by a central stalk formed by the gamma and epsilon chains, while a peripheral stalk is formed by the delta and b chains.

The protein localises to the cell inner membrane. It carries out the reaction ATP + H2O + 4 H(+)(in) = ADP + phosphate + 5 H(+)(out). Produces ATP from ADP in the presence of a proton gradient across the membrane. The alpha chain is a regulatory subunit. This Solibacter usitatus (strain Ellin6076) protein is ATP synthase subunit alpha.